Consider the following 371-residue polypeptide: Bifunctional enzyme IspD/IspF (371 aa).

Residues 1-210 (MSEMSLIMLA…LDLPTPSFEI (210 aa)) form a 2-C-methyl-D-erythritol 4-phosphate cytidylyltransferase region. The 2-C-methyl-D-erythritol 2,4-cyclodiphosphate synthase stretch occupies residues 211–371 (FTGNGFDVHE…NLKYFDWTRL (161 aa)). Residues D217 and H219 each contribute to the a divalent metal cation site. Residues 217 to 219 (DVH) and 243 to 244 (HS) each bind 4-CDP-2-C-methyl-D-erythritol 2-phosphate. H251 contacts a divalent metal cation. 4-CDP-2-C-methyl-D-erythritol 2-phosphate is bound by residues 265–267 (DIG), 270–274 (YPDTD), 309–315 (AQSPKLK), 341–344 (TTTE), F348, and R351.

In the N-terminal section; belongs to the IspD/TarI cytidylyltransferase family. IspD subfamily. It in the C-terminal section; belongs to the IspF family. Requires a divalent metal cation as cofactor.

It carries out the reaction 2-C-methyl-D-erythritol 4-phosphate + CTP + H(+) = 4-CDP-2-C-methyl-D-erythritol + diphosphate. The catalysed reaction is 4-CDP-2-C-methyl-D-erythritol 2-phosphate = 2-C-methyl-D-erythritol 2,4-cyclic diphosphate + CMP. The protein operates within isoprenoid biosynthesis; isopentenyl diphosphate biosynthesis via DXP pathway; isopentenyl diphosphate from 1-deoxy-D-xylulose 5-phosphate: step 2/6. It participates in isoprenoid biosynthesis; isopentenyl diphosphate biosynthesis via DXP pathway; isopentenyl diphosphate from 1-deoxy-D-xylulose 5-phosphate: step 4/6. Functionally, bifunctional enzyme that catalyzes the formation of 4-diphosphocytidyl-2-C-methyl-D-erythritol from CTP and 2-C-methyl-D-erythritol 4-phosphate (MEP) (IspD), and catalyzes the conversion of 4-diphosphocytidyl-2-C-methyl-D-erythritol 2-phosphate (CDP-ME2P) to 2-C-methyl-D-erythritol 2,4-cyclodiphosphate (ME-CPP) with a corresponding release of cytidine 5-monophosphate (CMP) (IspF). The sequence is that of Bifunctional enzyme IspD/IspF from Campylobacter jejuni subsp. jejuni serotype O:2 (strain ATCC 700819 / NCTC 11168).